A 316-amino-acid polypeptide reads, in one-letter code: MNLDYLDFEQPIAELQAKIDELRRVGTSQEINLTEEVNKLEEKNAQLTRQIFSNLTAQQIVQLARHPLRPYTLDYIQRIFTDFNELHGDRHYSQASAIIGGLARLNGEPVMVIGHQKGRTTQEKIYRNFGMARPEGFRKALRLMKLAERFSIPVITLIDTPGAYPGIGAEERNQSEAIARNLFEMAQLKIPIICTIIGEGCSGGALAIGVGDRTLMLQYAYYSVISPEGCASILWKSAEKAGEAAEALGLTANRLYELGLIDEIIKEPLGGAHRDTDAMAEKLKKHLQANLTNLQAKSANDLLEERYRRWLSYGKD.

Positions 39–293 (KLEEKNAQLT…KKHLQANLTN (255 aa)) constitute a CoA carboxyltransferase C-terminal domain.

Belongs to the AccA family. In terms of assembly, acetyl-CoA carboxylase is a heterohexamer composed of biotin carboxyl carrier protein (AccB), biotin carboxylase (AccC) and two subunits each of ACCase subunit alpha (AccA) and ACCase subunit beta (AccD).

It localises to the cytoplasm. It catalyses the reaction N(6)-carboxybiotinyl-L-lysyl-[protein] + acetyl-CoA = N(6)-biotinyl-L-lysyl-[protein] + malonyl-CoA. It functions in the pathway lipid metabolism; malonyl-CoA biosynthesis; malonyl-CoA from acetyl-CoA: step 1/1. Its function is as follows. Component of the acetyl coenzyme A carboxylase (ACC) complex. First, biotin carboxylase catalyzes the carboxylation of biotin on its carrier protein (BCCP) and then the CO(2) group is transferred by the carboxyltransferase to acetyl-CoA to form malonyl-CoA. The polypeptide is Acetyl-coenzyme A carboxylase carboxyl transferase subunit alpha (Coxiella burnetii (strain RSA 331 / Henzerling II)).